The chain runs to 471 residues: Phosphoglycerate kinase (471 aa).

Substrate is bound by residues 24–26, Arg-41, 64–67, Arg-127, and Arg-169; these read DFN and HLSR. ATP contacts are provided by residues Lys-220, Gly-307, Glu-338, and 368 to 371; that span reads GGDS. Residues 417–471 form a disordered region; that stretch reads KVEAVKEKTTTTTESASKEKSSTAKTASKPATSKTTAAKKPAEKKPAAKKPAAKK. The span at 439-455 shows a compositional bias: low complexity; that stretch reads TAKTASKPATSKTTAAK.

The protein belongs to the phosphoglycerate kinase family. As to quaternary structure, monomer.

It localises to the cytoplasm. It catalyses the reaction (2R)-3-phosphoglycerate + ATP = (2R)-3-phospho-glyceroyl phosphate + ADP. Its pathway is carbohydrate degradation; glycolysis; pyruvate from D-glyceraldehyde 3-phosphate: step 2/5. The protein is Phosphoglycerate kinase of Malacoplasma penetrans (strain HF-2) (Mycoplasma penetrans).